Consider the following 291-residue polypeptide: Polyamine aminopropyltransferase (291 aa).

The 241-residue stretch at 5-245 folds into the PABS domain; the sequence is PGPISLIEPL…YAVNYILGSL (241 aa). Gln36 contacts S-methyl-5'-thioadenosine. The spermidine site is built by His67 and Glu91. S-methyl-5'-thioadenosine contacts are provided by residues Asp111 and 143-144; that span reads DG. Asp164 acts as the Proton acceptor in catalysis.

The protein belongs to the spermidine/spermine synthase family. As to quaternary structure, homodimer or homotetramer.

The protein resides in the cytoplasm. The catalysed reaction is S-adenosyl 3-(methylsulfanyl)propylamine + putrescine = S-methyl-5'-thioadenosine + spermidine + H(+). The protein operates within amine and polyamine biosynthesis; spermidine biosynthesis; spermidine from putrescine: step 1/1. In terms of biological role, catalyzes the irreversible transfer of a propylamine group from the amino donor S-adenosylmethioninamine (decarboxy-AdoMet) to putrescine (1,4-diaminobutane) to yield spermidine. In Pyrobaculum neutrophilum (strain DSM 2338 / JCM 9278 / NBRC 100436 / V24Sta) (Thermoproteus neutrophilus), this protein is Polyamine aminopropyltransferase.